A 325-amino-acid polypeptide reads, in one-letter code: Replication factor C small subunit (325 aa).

An ATP-binding site is contributed by 44-51; that stretch reads GPPGTGKT.

It belongs to the activator 1 small subunits family. RfcS subfamily. Heteromultimer composed of small subunits (RfcS) and large subunits (RfcL).

Part of the RFC clamp loader complex which loads the PCNA sliding clamp onto DNA. The polypeptide is Replication factor C small subunit (Thermofilum pendens (strain DSM 2475 / Hrk 5)).